The chain runs to 360 residues: Chorismate synthase (360 aa).

2 residues coordinate NADP(+): R48 and R54. Residues 125–127 (RSS), 246–247 (NA), G286, 301–305 (KPTSS), and R327 contribute to the FMN site.

It belongs to the chorismate synthase family. As to quaternary structure, homotetramer. The cofactor is FMNH2.

It catalyses the reaction 5-O-(1-carboxyvinyl)-3-phosphoshikimate = chorismate + phosphate. Its pathway is metabolic intermediate biosynthesis; chorismate biosynthesis; chorismate from D-erythrose 4-phosphate and phosphoenolpyruvate: step 7/7. Its function is as follows. Catalyzes the anti-1,4-elimination of the C-3 phosphate and the C-6 proR hydrogen from 5-enolpyruvylshikimate-3-phosphate (EPSP) to yield chorismate, which is the branch point compound that serves as the starting substrate for the three terminal pathways of aromatic amino acid biosynthesis. This reaction introduces a second double bond into the aromatic ring system. The polypeptide is Chorismate synthase (Actinobacillus pleuropneumoniae serotype 5b (strain L20)).